Consider the following 425-residue polypeptide: MNIVVVGLSHKTAPVEIREKLSIQEAKMDEAIAHLKSYPHVEEVAVISTCNRLEIYAVVQETEQGVREICQFLAETGQLQLNRLRRYLFTLLHQDAIRHLLRVAAGLESLVLGEGQILAQVKAAHKLGQQHKGLGRLLDRMFKRAITAGKRVRSETNIGTGAVSISSAAVELAQMKVKDLSNQKIAIIGAGKMSRLLVQHLVSKGAEDITIVNRSERGARDLAKKFPDVDLQLELLPEMLNVVEQADIVFTSTGATEPILDRAKLENLDLHTLILIDISVPLNVAADVEEIAGVRLYNVDALKEVVAQNQASRRKMAEEAEALLEEEVENYIQWWQSLETVPTISSLRSKVESIREQELEKALSRLGAEFEEKHQEVIETLTRGIVNKILHDPMVQLRAQQDIEARRVCLQSLQMLFNLETEEAI.

Substrate contacts are provided by residues 49–52 (TCNR), Ser109, 114–116 (EGQ), and Gln120. Residue Cys50 is the Nucleophile of the active site. An NADP(+)-binding site is contributed by 189-194 (GAGKMS).

This sequence belongs to the glutamyl-tRNA reductase family. In terms of assembly, homodimer.

It catalyses the reaction (S)-4-amino-5-oxopentanoate + tRNA(Glu) + NADP(+) = L-glutamyl-tRNA(Glu) + NADPH + H(+). It functions in the pathway porphyrin-containing compound metabolism; protoporphyrin-IX biosynthesis; 5-aminolevulinate from L-glutamyl-tRNA(Glu): step 1/2. It participates in porphyrin-containing compound metabolism; chlorophyll biosynthesis. Functionally, catalyzes the NADPH-dependent reduction of glutamyl-tRNA(Glu) to glutamate 1-semialdehyde (GSA). The polypeptide is Glutamyl-tRNA reductase (Picosynechococcus sp. (strain ATCC 27264 / PCC 7002 / PR-6) (Agmenellum quadruplicatum)).